The primary structure comprises 206 residues: MVKIPCRSENGQVVNIEVSDSVFDRVYNEALVHQIVTSYLANARSGTRAQKGRSEVAGSTRKQWRQKGTGRARVGAASNPLWRGGGKIFPNKPTENFTKKVNRKMYRAGMCTIFSQLLRNSKLVAISEFRVETTKTKFFLQKLKNYQLENVMIITDEVDENLYLASRNVPNIKVVEIDLIDPVSLLSYDNVVITREAVNKIESVLQ.

The segment at 47–71 is disordered; it reads TRAQKGRSEVAGSTRKQWRQKGTGR.

It belongs to the universal ribosomal protein uL4 family. Part of the 50S ribosomal subunit.

In terms of biological role, one of the primary rRNA binding proteins, this protein initially binds near the 5'-end of the 23S rRNA. It is important during the early stages of 50S assembly. It makes multiple contacts with different domains of the 23S rRNA in the assembled 50S subunit and ribosome. Functionally, forms part of the polypeptide exit tunnel. The protein is Large ribosomal subunit protein uL4 of Nitrosomonas eutropha (strain DSM 101675 / C91 / Nm57).